The following is a 288-amino-acid chain: 33 kDa chaperonin (288 aa).

2 disulfide bridges follow: cysteine 236/cysteine 238 and cysteine 269/cysteine 272.

This sequence belongs to the HSP33 family. In terms of processing, under oxidizing conditions two disulfide bonds are formed involving the reactive cysteines. Under reducing conditions zinc is bound to the reactive cysteines and the protein is inactive.

It is found in the cytoplasm. Functionally, redox regulated molecular chaperone. Protects both thermally unfolding and oxidatively damaged proteins from irreversible aggregation. Plays an important role in the bacterial defense system toward oxidative stress. The polypeptide is 33 kDa chaperonin (Lactococcus lactis subsp. lactis (strain IL1403) (Streptococcus lactis)).